The chain runs to 576 residues: Arginine--tRNA ligase (576 aa).

The 'HIGH' region motif lies at 126 to 136 (ANPTGPMHIGH).

This sequence belongs to the class-I aminoacyl-tRNA synthetase family. Monomer.

The protein resides in the cytoplasm. The enzyme catalyses tRNA(Arg) + L-arginine + ATP = L-arginyl-tRNA(Arg) + AMP + diphosphate. In Rickettsia typhi (strain ATCC VR-144 / Wilmington), this protein is Arginine--tRNA ligase.